Here is a 171-residue protein sequence, read N- to C-terminus: Protein BTG1 (171 aa).

Ser159 carries the post-translational modification Phosphoserine.

This sequence belongs to the BTG family. In terms of assembly, interacts with CNOT7 and CNOT8.

Functionally, anti-proliferative protein. This is Protein BTG1 (Btg1) from Rattus norvegicus (Rat).